Here is a 201-residue protein sequence, read N- to C-terminus: Large ribosomal subunit protein uL4 (201 aa).

Residues 46–71 are disordered; it reads QKTRAEITGTGKKPWRQKGTGRARAG.

This sequence belongs to the universal ribosomal protein uL4 family. In terms of assembly, part of the 50S ribosomal subunit.

In terms of biological role, one of the primary rRNA binding proteins, this protein initially binds near the 5'-end of the 23S rRNA. It is important during the early stages of 50S assembly. It makes multiple contacts with different domains of the 23S rRNA in the assembled 50S subunit and ribosome. Forms part of the polypeptide exit tunnel. The polypeptide is Large ribosomal subunit protein uL4 (Shewanella amazonensis (strain ATCC BAA-1098 / SB2B)).